We begin with the raw amino-acid sequence, 80 residues long: CLAVATA3/ESR (CLE)-related protein 4 (80 aa).

The N-terminal stretch at 1–22 (MASFKLWVCLILLLLEFSVHQC) is a signal peptide. The disordered stretch occupies residues 55–80 (SKDGQTVLGTLDSKRLSPGGPDPRHH). Pro-72 and Pro-75 each carry hydroxyproline. Pro-75 carries O-linked (Ara...) hydroxyproline glycosylation.

It belongs to the CLV3/ESR signal peptide family. Post-translationally, the O-glycosylation (arabinosylation) of the hydroxyproline Pro-75 enhances binding affinity of the CLE4p peptide for its receptor. Expressed in roots and seedlings.

It is found in the secreted. The protein resides in the extracellular space. Functionally, extracellular signal peptide that regulates cell fate. The sequence is that of CLAVATA3/ESR (CLE)-related protein 4 from Arabidopsis thaliana (Mouse-ear cress).